The primary structure comprises 308 residues: Methionyl-tRNA formyltransferase (308 aa).

(6S)-5,6,7,8-tetrahydrofolate is bound at residue 109 to 112; the sequence is SLLP.

This sequence belongs to the Fmt family.

The catalysed reaction is L-methionyl-tRNA(fMet) + (6R)-10-formyltetrahydrofolate = N-formyl-L-methionyl-tRNA(fMet) + (6S)-5,6,7,8-tetrahydrofolate + H(+). Its function is as follows. Attaches a formyl group to the free amino group of methionyl-tRNA(fMet). The formyl group appears to play a dual role in the initiator identity of N-formylmethionyl-tRNA by promoting its recognition by IF2 and preventing the misappropriation of this tRNA by the elongation apparatus. This is Methionyl-tRNA formyltransferase from Methylococcus capsulatus (strain ATCC 33009 / NCIMB 11132 / Bath).